A 131-amino-acid chain; its full sequence is Agouti-signaling protein (131 aa).

An N-terminal signal peptide occupies residues 1 to 22; it reads MDVTRLLLATLVGFLCFFTVHS. Residue Asn39 is glycosylated (N-linked (GlcNAc...) asparagine). The disordered stretch occupies residues 58-100; the sequence is KSKKISRKEAEKRKRSSKKKASMKKVARPPPPSPCVATRDSCK. Residues 70–84 are compositionally biased toward basic residues; sequence RKRSSKKKASMKKVA. Intrachain disulfides connect Cys92-Cys107, Cys99-Cys113, Cys106-Cys124, Cys110-Cys131, and Cys115-Cys122. The Agouti domain maps to 92-131; the sequence is CVATRDSCKPPAPACCDPCASCQCRFFGSACTCRVLNPNC.

As to expression, epithelial cells of the hair follicles and the epidermis.

The protein resides in the secreted. Its function is as follows. Involved in the regulation of melanogenesis. The binding of ASP to MC1R precludes alpha-MSH initiated signaling and thus blocks production of cAMP, leading to a down-regulation of eumelanogenesis (brown/black pigment) and thus increasing synthesis of pheomelanin (yellow/red pigment). Causes hair follicle melanocytes to synthesize phaeomelanin instead of black or brown pigment eumelanin and produces hairs with a subapical yellow band on an otherwise black or brown background when expressed during the mid-portion of hair growth. The polypeptide is Agouti-signaling protein (Asip) (Mus musculus (Mouse)).